We begin with the raw amino-acid sequence, 184 residues long: MAILSDKWIREAAQTRGMIEPFEEAQRRDGCISYGLSSFGYDARVAPEFKIFTNVNSAVVDPKDFDGDSLVDRETEVCIIPPNSFALARTVEYFRIPEDVLVICLGKSTYARCGIIVNVTPLEPGWEGHVTLEFSNTTPLPAKIYANEGACQFLFLQGNERPEVTYADRAGKYMGQRGVTLPRL.

Residues 107–112 (KSTYAR), 131–133 (TLE), Q152, Y166, and Q176 each bind dCTP. Residue E133 is the Proton donor/acceptor of the active site.

It belongs to the dCTP deaminase family. As to quaternary structure, homotrimer.

The catalysed reaction is dCTP + H2O + H(+) = dUTP + NH4(+). It participates in pyrimidine metabolism; dUMP biosynthesis; dUMP from dCTP (dUTP route): step 1/2. Functionally, catalyzes the deamination of dCTP to dUTP. This chain is dCTP deaminase, found in Erythrobacter litoralis (strain HTCC2594).